We begin with the raw amino-acid sequence, 246 residues long: 4'-phosphopantetheinyl transferase Svp (246 aa).

Residues 223–232 (AGTAEESAEG) show a composition bias toward low complexity. Positions 223-246 (AGTAEESAEGAGKEATADDRTAVP) are disordered. The span at 233–246 (AGKEATADDRTAVP) shows a compositional bias: basic and acidic residues.

The protein belongs to the P-Pant transferase superfamily. Gsp/Sfp/HetI/AcpT family.

The catalysed reaction is apo-[ACP] + CoA = holo-[ACP] + adenosine 3',5'-bisphosphate + H(+). Its function is as follows. Transfers the 4'-phosphopantetheine moiety from coenzyme A to a Ser of an acyl-carrier-protein. The enzyme is able to transfer the cofactor to a broad range of enzymes with acyl- or peptidyl-carrier protein domains. The polypeptide is 4'-phosphopantetheinyl transferase Svp (svp) (Streptomyces mobaraensis (Streptoverticillium mobaraense)).